The chain runs to 273 residues: Large ribosomal subunit protein uL2 (273 aa).

Positions Val-228–Lys-273 are disordered. A compositionally biased stretch (basic residues) spans Lys-254 to Lys-273.

Belongs to the universal ribosomal protein uL2 family. In terms of assembly, part of the 50S ribosomal subunit. Forms a bridge to the 30S subunit in the 70S ribosome.

Functionally, one of the primary rRNA binding proteins. Required for association of the 30S and 50S subunits to form the 70S ribosome, for tRNA binding and peptide bond formation. It has been suggested to have peptidyltransferase activity; this is somewhat controversial. Makes several contacts with the 16S rRNA in the 70S ribosome. This is Large ribosomal subunit protein uL2 from Rickettsia felis (strain ATCC VR-1525 / URRWXCal2) (Rickettsia azadi).